The chain runs to 400 residues: Double C2-like domain-containing protein alpha (400 aa).

The interval 1–89 (MRGRRGDRMT…DSYDSDDATA (89 aa)) is interaction with UNC13D and DYNLT1. C2 domains follow at residues 89 to 211 (ALGT…HFNI) and 251 to 384 (ERGR…ERWH). Ca(2+) is bound by residues Asp-120, Asp-126, Asp-181, Asp-183, Asp-282, Asp-288, Asp-342, Asp-344, and Asp-350. Residues 215 to 400 (RQVPLASPSS…PPAAGALSSA (186 aa)) form an interaction with UNC13D region.

As to quaternary structure, interacts (via N-terminus) with UNC13A. Interacts with cytoplasmic dynein light chain DYNLT1. Interacts with UNC13D. It depends on Ca(2+) as a cofactor. Predominantly expressed in brain. Also expressed in testis.

It localises to the lysosome. The protein localises to the cytoplasmic vesicle. It is found in the secretory vesicle. Its subcellular location is the synaptic vesicle membrane. The protein resides in the synapse. It localises to the synaptosome. Calcium sensor which most probably regulates fusion of vesicles with membranes. Binds calcium and phospholipids. May be involved in calcium dependent neurotransmitter release through the interaction with UNC13A. May be involved in calcium-dependent spontaneous release of neurotransmitter in absence of action potentials in neuronal cells. Regulates Ca(2+)-dependent secretory lysosome exocytosis in mast cells. The chain is Double C2-like domain-containing protein alpha (DOC2A) from Homo sapiens (Human).